Here is a 188-residue protein sequence, read N- to C-terminus: Phosphoribosylglycinamide formyltransferase (188 aa).

Position 12 to 14 (12 to 14) interacts with N(1)-(5-phospho-beta-D-ribosyl)glycinamide; it reads GSN. (6R)-10-formyltetrahydrofolate is bound by residues Lys-66, 91–94, and Asn-108; that span reads MRLI. His-110 functions as the Proton donor in the catalytic mechanism.

It belongs to the GART family.

It carries out the reaction N(1)-(5-phospho-beta-D-ribosyl)glycinamide + (6R)-10-formyltetrahydrofolate = N(2)-formyl-N(1)-(5-phospho-beta-D-ribosyl)glycinamide + (6S)-5,6,7,8-tetrahydrofolate + H(+). It participates in purine metabolism; IMP biosynthesis via de novo pathway; N(2)-formyl-N(1)-(5-phospho-D-ribosyl)glycinamide from N(1)-(5-phospho-D-ribosyl)glycinamide (10-formyl THF route): step 1/1. Its function is as follows. Catalyzes the transfer of a formyl group from 10-formyltetrahydrofolate to 5-phospho-ribosyl-glycinamide (GAR), producing 5-phospho-ribosyl-N-formylglycinamide (FGAR) and tetrahydrofolate. In Staphylococcus aureus (strain MSSA476), this protein is Phosphoribosylglycinamide formyltransferase.